The following is a 379-amino-acid chain: Cytochrome b (379 aa).

4 helical membrane passes run 33 to 53, 77 to 98, 113 to 133, and 178 to 198; these read FGSL…FLAM, WLIR…YLHI, WNIG…GYVL, and FFAF…LHLL. Heme b is bound by residues His83 and His97. The heme b site is built by His182 and His196. Position 201 (His201) interacts with a ubiquinone. The next 4 membrane-spanning stretches (helical) occupy residues 226–246, 288–308, 320–340, and 347–367; these read YKDL…ALFY, LGGV…PILH, ASQL…WIGG, and YIII…VLNP.

It belongs to the cytochrome b family. As to quaternary structure, the cytochrome bc1 complex contains 3 respiratory subunits (MT-CYB, CYC1 and UQCRFS1), 2 core proteins (UQCRC1 and UQCRC2) and probably 6 low-molecular weight proteins. Requires heme b as cofactor.

The protein resides in the mitochondrion inner membrane. Its function is as follows. Component of the ubiquinol-cytochrome c reductase complex (complex III or cytochrome b-c1 complex) that is part of the mitochondrial respiratory chain. The b-c1 complex mediates electron transfer from ubiquinol to cytochrome c. Contributes to the generation of a proton gradient across the mitochondrial membrane that is then used for ATP synthesis. In Anguilla rostrata (American eel), this protein is Cytochrome b (mt-cyb).